The primary structure comprises 397 residues: Digeranylgeranylglycerophospholipid reductase 3 (397 aa).

Residues alanine 16, aspartate 35, cysteine 46, alanine 47, glycine 49, arginine 102, alanine 126, aspartate 283, glycine 295, and isoleucine 296 each contribute to the FAD site. Lysine 338 is an a 2,3-bis-O-(geranylgeranyl)-sn-glycerol 1-phospholipid binding site.

Belongs to the geranylgeranyl reductase family. DGGGPL reductase subfamily. It depends on FAD as a cofactor.

It catalyses the reaction a 2,3-bis-O-phytanyl-sn-glycerol 1-phospholipid + 8 A = a 2,3-bis-O-(geranylgeranyl)-sn-glycerol 1-phospholipid + 8 AH2. The catalysed reaction is 2,3-bis-O-(phytanyl)-sn-glycerol 1-phosphate + 8 A = 2,3-bis-O-(geranylgeranyl)-sn-glycerol 1-phosphate + 8 AH2. It carries out the reaction CDP-2,3-bis-O-(geranylgeranyl)-sn-glycerol + 8 AH2 = CDP-2,3-bis-O-(phytanyl)-sn-glycerol + 8 A. The enzyme catalyses archaetidylserine + 8 AH2 = 2,3-bis-O-phytanyl-sn-glycero-3-phospho-L-serine + 8 A. It participates in membrane lipid metabolism; glycerophospholipid metabolism. Its function is as follows. Is involved in the reduction of 2,3-digeranylgeranylglycerophospholipids (unsaturated archaeols) into 2,3-diphytanylglycerophospholipids (saturated archaeols) in the biosynthesis of archaeal membrane lipids. Catalyzes the formation of archaetidic acid (2,3-di-O-phytanyl-sn-glyceryl phosphate) from 2,3-di-O-geranylgeranylglyceryl phosphate (DGGGP) via the hydrogenation of each double bond of the isoprenoid chains. Is also probably able to reduce double bonds of geranyl groups in CDP-2,3-bis-O-(geranylgeranyl)-sn-glycerol and archaetidylserine, thus acting at various stages in the biosynthesis of archaeal membrane lipids. The chain is Digeranylgeranylglycerophospholipid reductase 3 from Methanosphaera stadtmanae (strain ATCC 43021 / DSM 3091 / JCM 11832 / MCB-3).